Reading from the N-terminus, the 154-residue chain is Immunity protein YwqK (154 aa).

In terms of assembly, probably interacts with cognate toxin YwqJ but not with other non-cognate LXG toxins. The interaction inhibits the toxic activity of YwqJ.

It localises to the cytoplasm. Immunity component of one of 6 LXG toxin-immunity modules in this strain. They promote kin selection, mediate competition in biofilms, and drive spatial segregation of different strains, indicating that LXG toxins may help avoid warfare between strains in biofilms. Mediates intercellular competition during biofilm formation; disruption of the operon disadvantages the bacteria, but overexpression of the cognate immunity protein restores growth in competition with wild-type. In situ neutralizes the toxic effect of cognate toxin YqcG. Probably neutralizes the ability to inhibit growth of cognate toxin YwqJ. Probably does not have immunity protein activity on other LXG toxins. The chain is Immunity protein YwqK (ywqK) from Bacillus subtilis (strain 168).